The sequence spans 853 residues: DNA mismatch repair protein MutS (853 aa).

614-621 (GPNMGGKS) is an ATP binding site.

The protein belongs to the DNA mismatch repair MutS family.

Functionally, this protein is involved in the repair of mismatches in DNA. It is possible that it carries out the mismatch recognition step. This protein has a weak ATPase activity. In Enterobacter sp. (strain 638), this protein is DNA mismatch repair protein MutS.